Here is a 92-residue protein sequence, read N- to C-terminus: Small ribosomal subunit protein uS19 (92 aa).

Belongs to the universal ribosomal protein uS19 family.

Its function is as follows. Protein S19 forms a complex with S13 that binds strongly to the 16S ribosomal RNA. This chain is Small ribosomal subunit protein uS19, found in Proteus mirabilis (strain HI4320).